A 634-amino-acid polypeptide reads, in one-letter code: Ankyrin repeat and SOCS box protein 2 (634 aa).

Positions 26 to 45 (SEEELLQMAIEQSLADKTRG) constitute a UIM domain. The disordered stretch occupies residues 36–82 (EQSLADKTRGPTPAEASASSQTNHQPGHFHPWTRSPSSPENPPARAP). ANK repeat units lie at residues 104–133 (AAMDPVLKAIKEGDEEALKIMIQDGKNLAE), 137–167 (EGWLPLHEAAYYGQLGCLKVLQQAYPGTIDQ), 171–200 (QEETALYLATCREHLDCLLSLLQAGAEPDI), 204–233 (SRETPLYKACERKNAEAVRILVRYNADANH), 237–266 (RGWTALHESVSRNDLEVMEILVSGGAKVEA), 270–299 (YSITPLFVAAQSGQLEALRFLAKHGADINT), 303–332 (DSASALYEASKNEHEDVVEFLLSQGADANK), 336–365 (DGLLPLHVASKKGNYRIVQMLLPVTSRTRV), 368–397 (SGISPLHLAAERNHDAVLEALLAARFDVNA), 410–439 (RRSSALYFAVVNNNVYATELLLLAGADPNR), 440–469 (DVISPLLVAIRHGCLRTMQLLLDHGANIDA), and 476–504 (TAFPATIMFAMKCLSLLKFLMDLGCDGEP). A Phosphoserine modification is found at serine 371. The SOCS box domain maps to 580 to 634 (EDWAVIKEKAEPPRPLAHLCRLRVRKAIGKYRIKLLDTLPLPGRLIRYLKYENTQ).

It belongs to the ankyrin SOCS box (ASB) family. Component of a probable ECS E3 ubiquitin-protein ligase complex which contains CUL5, either RBX1 or RNF7/RBX2, Elongin BC complex (ELOB and ELOC) and ASB2. Interacts with SKP2. Through its interaction with SKP2, likely to bridge the formation of dimeric E3-ubiquitin-protein ligase complexes composed of an ECS complex and an SCF(SKP2) complex. Interacts with JAK2; the interaction targets JAK2 for Notch-mediated proteasomal degradation. Interacts with TCF3/E2A; the interaction is mediated by SKP2 and targets TCF3 for Notch-mediated proteasomal degradation. In terms of assembly, interacts with DES. In terms of processing, monoubiquitinated. Post-translationally, not monoubiquitinated. Phosphorylation at Ser-371 is required for association with FLNA and subsequent FLNA degradation. Highest expression in muscle, heart and spleen. Highly expressed in cells of the first and second heart fields in the developing embryonic heart. At 9.5 dpc, robust expression predominantly in the left and right ventricles (RV) and to a lower extent in inflow and outflow tracts. At 10.5 and 11.5 dpc, expression is restricted to the myocardium with no expression observed in the endocardium. In terms of tissue distribution, not expressed in immature dendritic cells. Highly expressed in adult skeletal muscle with very low levels in adult bone marrow. As to expression, expressed in immature dendritic cells and in primary dendritic cells derived from the spleen. Highly expressed in adult bone marrow with negligible levels in adult skeletal muscle. Expressed at higher levels in T helper type 2 (Th2) cells than in regulatory T (Treg) cells, type 1 helper T (Th1) cells and T helper 17 (Th17) cells.

Its subcellular location is the cytoplasm. The protein resides in the cytoskeleton. The protein localises to the stress fiber. It localises to the myofibril. It is found in the sarcomere. Its subcellular location is the z line. It participates in protein modification; protein ubiquitination. In terms of biological role, substrate-recognition component of a SCF-like ECS (Elongin-Cullin-SOCS-box protein) E3 ubiquitin-protein ligase complex which mediates the ubiquitination and subsequent proteasomal degradation of target proteins. Mediates Notch-induced ubiquitination and degradation of substrates including TCF3/E2A and JAK2. Required during embryonic heart development for complete heart looping. Required for cardiomyocyte differentiation. Specifically promotes the ubiquitination of SMAD9 and targets it for proteasomal degradation, leading to avoid excessive accumulation of SMAD9. Plays a role in the regulation of NK-cell migration by modulating protein levels of filamin A/FLNA via regulation of its ubiquitination and proteasome degradation. Functionally, involved in myogenic differentiation and targets filamin FLNB for proteasomal degradation but not filamin FLNA. Also targets DES for proteasomal degradation. Acts as a negative regulator of skeletal muscle mass. Targets filamins FLNA and FLNB for proteasomal degradation. This leads to enhanced adhesion of hematopoietic cells to fibronectin. Required for FLNA degradation in immature cardiomyocytes which is necessary for actin cytoskeleton remodeling, leading to proper organization of myofibrils and function of mature cardiomyocytes. Required for degradation of FLNA and FLNB in immature dendritic cells (DC) which enhances immature DC migration by promoting DC podosome formation and DC-mediated degradation of the extracellular matrix. Does not promote proteasomal degradation of tyrosine-protein kinases JAK1 or JAK2 in hematopoietic cells. This chain is Ankyrin repeat and SOCS box protein 2, found in Mus musculus (Mouse).